A 374-amino-acid chain; its full sequence is F(420)H(2) dehydrogenase subunit D (374 aa).

This sequence belongs to the complex I 49 kDa subunit family. As to quaternary structure, the FPO complex is composed of at least 13 different subunits.

Its subcellular location is the cell inner membrane. The catalysed reaction is methanophenazine + reduced coenzyme F420-(gamma-L-Glu)(n) = dihydromethanophenazine + oxidized coenzyme F420-(gamma-L-Glu)(n) + H(+). Its function is as follows. Component of the F(420)H(2) dehydrogenase (FPO complex) which is part of the energy-conserving F(420)H(2):heterodisulfide oxidoreductase system. The membrane-bound electron transfer system of the complex plays an important role in the metabolism of methylotrophic methanogens when the organisms grow on methanol or methylamines. Catalyzes the oxidation of methanophenazine to dihydromethanophenazine. It shuttles electrons from F(420)H(2), via FAD and iron-sulfur (Fe-S) centers, to methanophenazine (an electron carrier in the membrane). It couples the redox reaction to proton translocation (for every two electrons transferred, two hydrogen ions are translocated across the cytoplasmic membrane), and thus conserves the redox energy in a proton gradient. It also catalyzes the oxidation of F(420)H(2) with quinones such as 2,3-dimethyl-1,4-naphthoquinone, 2-methyl-1,4-naphthoquinone and tetramethyl-p-benzoquinone. The protein is F(420)H(2) dehydrogenase subunit D (fpoD) of Methanosarcina mazei (strain ATCC BAA-159 / DSM 3647 / Goe1 / Go1 / JCM 11833 / OCM 88) (Methanosarcina frisia).